We begin with the raw amino-acid sequence, 203 residues long: uncharacterized protein (203 aa).

This is an uncharacterized protein from Methanocaldococcus jannaschii (strain ATCC 43067 / DSM 2661 / JAL-1 / JCM 10045 / NBRC 100440) (Methanococcus jannaschii).